We begin with the raw amino-acid sequence, 62 residues long: Sperm protamine P1 (62 aa).

Residues 1-62 (MARYRHSRSR…RYSRRRRRRY (62 aa)) form a disordered region.

Belongs to the protamine P1 family. In terms of tissue distribution, testis.

Its subcellular location is the nucleus. The protein localises to the chromosome. In terms of biological role, protamines substitute for histones in the chromatin of sperm during the haploid phase of spermatogenesis. They compact sperm DNA into a highly condensed, stable and inactive complex. This Dendrolagus dorianus (Doria's tree-kangaroo) protein is Sperm protamine P1 (PRM1).